We begin with the raw amino-acid sequence, 176 residues long: Ribosome maturation factor RimM (176 aa).

The PRC barrel domain maps to 93-166; that stretch reads ADEYYHADLI…QVVIEPPNEI (74 aa).

The protein belongs to the RimM family. In terms of assembly, binds ribosomal protein uS19.

The protein localises to the cytoplasm. An accessory protein needed during the final step in the assembly of 30S ribosomal subunit, possibly for assembly of the head region. Essential for efficient processing of 16S rRNA. May be needed both before and after RbfA during the maturation of 16S rRNA. It has affinity for free ribosomal 30S subunits but not for 70S ribosomes. The polypeptide is Ribosome maturation factor RimM (Rhodopseudomonas palustris (strain ATCC BAA-98 / CGA009)).